We begin with the raw amino-acid sequence, 1121 residues long: Cuscuta receptor 1 (1121 aa).

An N-terminal signal peptide occupies residues 1–20 (MGNIKFLLLVFFLIVVVVNG). The Extracellular segment spans residues 21-1058 (CWEEERNALL…EESSELEDIQ (1038 aa)). N-linked (GlcNAc...) asparagine glycosylation is present at Asn-91. LRR repeat units lie at residues 98–122 (FKSL…GFSK), 126–152 (LPNL…CWIS), 185–209 (LSNL…ALGE), 210–233 (LRNL…SLKI), 234–259 (FPSL…IIDL), 260–282 (SNLE…KGNK), 284–308 (MTSL…SLKS), and 309–331 (FSSL…IYAL). A glycan (N-linked (GlcNAc...) asparagine) is linked at Asn-224. Residues Asn-298, Asn-321, and Asn-333 are each glycosylated (N-linked (GlcNAc...) asparagine). The stretch at 334–360 (LSTVEYLYFKGSSLNDNFLPNIGQMTS) is one LRR 9 repeat. Asn-372 and Asn-406 each carry an N-linked (GlcNAc...) asparagine glycan. 21 LRR repeats span residues 383-406 (LKYI…CLGN), 407-432 (LTSL…IWRR), 433-457 (LTSL…QFSD), 459-479 (KKLI…EYQN), 507-531 (QYDL…LLEN), 556-580 (HLHL…MSLA), 581-605 (FPKL…ISGI), 607-628 (LTIL…LAVV), 630-654 (SPQL…EFRP), 655-678 (HVLS…VFLS), 680-701 (LITL…TRDN), 702-725 (RRLL…ICNL), 726-749 (KIIN…VSSL), 751-772 (LKHI…IFNF), 773-796 (SSLI…IGSL), 797-820 (SNLN…ICML), 822-846 (NLSI…YLTQ), 914-938 (LKYM…LGNM), 939-961 (SNIH…TFSN), 962-986 (LQEI…LLEL), and 988-1012 (SLAV…QFGT). N-linked (GlcNAc...) asparagine glycans are attached at residues Asn-531, Asn-576, and Asn-588. Residue Asn-689 is glycosylated (N-linked (GlcNAc...) asparagine). An N-linked (GlcNAc...) asparagine glycan is attached at Asn-771. Residues Asn-822, Asn-937, Asn-945, Asn-976, Asn-998, Asn-1014, and Asn-1041 are each glycosylated (N-linked (GlcNAc...) asparagine). Residues 1059–1079 (CFYIGFVVSFGAILLGLAAAL) form a helical membrane-spanning segment. Topologically, residues 1080–1121 (CLNRHWRRAWFRMIEALMFYCYYFVLDNIVTPIKSRWYKNVG) are cytoplasmic.

This sequence belongs to the RLP family. In terms of assembly, interacts with an 11 kDa glycine-rich protein (GRP) of C.reflexa. Interacts with SOBIR1 and SOBIR1-like kinases; presence or absence of GRP has no effect on interaction.

The protein localises to the cell membrane. It is found in the cell surface. In terms of biological role, involved in plant defense. Contributes to resistance against parasitic plant C.reflexa. Acts as a receptor for the 11 kDa glycine-rich protein (GRP) of C.reflexa inducing immune responses such as emission of stress-related phytohormone ethylene, reactive oxygen species (ROS) release, and hypersensitive cell death. Recognizes a specific pathogen-associated molecular pattern (PAMP), a cysteine-rich peptide 21 (crip21), from GRP located on the cell wall of C.reflexa. This Solanum lycopersicum (Tomato) protein is Cuscuta receptor 1.